The chain runs to 340 residues: tRNA-specific 2-thiouridylase MnmA (340 aa).

ATP contacts are provided by residues 6 to 13 (AMSGGVDS) and methionine 32. Cysteine 92 functions as the Nucleophile in the catalytic mechanism. A disulfide bond links cysteine 92 and cysteine 186. Glycine 116 lines the ATP pocket. An interaction with tRNA region spans residues 134-136 (KDQ). Cysteine 186 (cysteine persulfide intermediate) is an active-site residue. Residues 288 to 289 (RY) are interaction with tRNA.

The protein belongs to the MnmA/TRMU family.

The protein localises to the cytoplasm. It catalyses the reaction S-sulfanyl-L-cysteinyl-[protein] + uridine(34) in tRNA + AH2 + ATP = 2-thiouridine(34) in tRNA + L-cysteinyl-[protein] + A + AMP + diphosphate + H(+). In terms of biological role, catalyzes the 2-thiolation of uridine at the wobble position (U34) of tRNA, leading to the formation of s(2)U34. The sequence is that of tRNA-specific 2-thiouridylase MnmA from Campylobacter concisus (strain 13826).